The primary structure comprises 390 residues: Histone acetyltransferase type B catalytic subunit (390 aa).

Interaction with histone H4 N-terminus stretches follow at residues 42-44 (DSE) and 193-195 (YQF). One can recognise an N-acetyltransferase domain in the interval 138 to 290 (VSLQDPAIKM…ADCPNELPIN (153 aa)). Acetyl-CoA contacts are provided by residues 221–223 (FLI) and 228–234 (QGHGHGK). The active-site Proton donor/acceptor is the Glu-256.

Belongs to the HAT1 family. Component of the HAT-B complex composed of at least HAT1 and HAT2. The HAT-B complex binds to histone H4 tail.

It is found in the cytoplasm. The protein resides in the nucleus. The enzyme catalyses L-lysyl-[protein] + acetyl-CoA = N(6)-acetyl-L-lysyl-[protein] + CoA + H(+). Its function is as follows. Catalytic component of the histone acetylase B (HAT-B) complex. Acetylates 'Lys-12' of histone H4 which is required for telomeric silencing. Has intrinsic substrate specificity that modifies lysine in recognition sequence GXGKXG. Involved in DNA double-strand break repair. This chain is Histone acetyltransferase type B catalytic subunit (HAT1), found in Kluyveromyces lactis (strain ATCC 8585 / CBS 2359 / DSM 70799 / NBRC 1267 / NRRL Y-1140 / WM37) (Yeast).